Here is a 160-residue protein sequence, read N- to C-terminus: MTNTPSDQPLKQVNQRGAARLAAVQALYQMDVGGTGVLEIVAEYEEHRLGKELDGDTYLRADASWFRSIVAGVVRDQRKLDPLIGSALQDDWALSRLDSTVRAILRAGTFEILERKDVPVPVIVTEYVEIAKAFFQDEEPKLVNAVLDRIAKQVRGEQRK.

Belongs to the NusB family.

In terms of biological role, involved in transcription antitermination. Required for transcription of ribosomal RNA (rRNA) genes. Binds specifically to the boxA antiterminator sequence of the ribosomal RNA (rrn) operons. In Sinorhizobium medicae (strain WSM419) (Ensifer medicae), this protein is Transcription antitermination protein NusB.